The primary structure comprises 69 residues: Small, acid-soluble spore protein 1 (69 aa).

This sequence belongs to the alpha/beta-type SASP family.

In terms of biological role, SASP are bound to spore DNA. They are double-stranded DNA-binding proteins that cause DNA to change to an a-like conformation. They protect the DNA backbone from chemical and enzymatic cleavage and are thus involved in dormant spore's high resistance to UV light. This is Small, acid-soluble spore protein 1 (Su-1) from Sporosarcina ureae.